Consider the following 230-residue polypeptide: MNDLLTRRLLTMGAAAAMLAAVLLLTPITVPAGYPGAVAPATAACPDAEVVFARGRFEPPGIGTVGNAFVSALRSKVNKNVGVYAVKYPADNQIDVGANDMSAHIQSMANSCPNTRLVPGGYSLGAAVTDVVLAVPTQMWGFTNPLPPGSDEHIAAVALFGNGSQWVGPITNFSPAYNDRTIELCHGDDPVCHPADPNTWEANWPQHLAGAYVSSGMVNQAADFVAGKLQ.

Positions methionine 1 to alanine 32 form a signal peptide, tat-type signal. A disulfide bridge connects residues cysteine 45 and cysteine 112. Residue serine 123 is the Nucleophile of the active site. Cysteine 185 and cysteine 192 are joined by a disulfide. The active site involves aspartate 189. Histidine 207 acts as the Proton donor/acceptor in catalysis.

It belongs to the cutinase family. Post-translationally, predicted to be exported by the Tat system. The position of the signal peptide cleavage has not been experimentally proven.

It localises to the secreted. The protein localises to the cell surface. This chain is Probable carboxylesterase Culp2 (cut2), found in Mycobacterium bovis (strain ATCC BAA-935 / AF2122/97).